Reading from the N-terminus, the 444-residue chain is UDP-N-acetylglucosamine 1-carboxyvinyltransferase (444 aa).

22-23 (KN) is a binding site for phosphoenolpyruvate. Residue Arg94 participates in UDP-N-acetyl-alpha-D-glucosamine binding. The active-site Proton donor is the Asp119. UDP-N-acetyl-alpha-D-glucosamine-binding residues include Asp309 and Val331.

It belongs to the EPSP synthase family. MurA subfamily.

Its subcellular location is the cytoplasm. The catalysed reaction is phosphoenolpyruvate + UDP-N-acetyl-alpha-D-glucosamine = UDP-N-acetyl-3-O-(1-carboxyvinyl)-alpha-D-glucosamine + phosphate. It functions in the pathway cell wall biogenesis; peptidoglycan biosynthesis. Functionally, cell wall formation. Adds enolpyruvyl to UDP-N-acetylglucosamine. The polypeptide is UDP-N-acetylglucosamine 1-carboxyvinyltransferase (Chlamydia trachomatis serovar A (strain ATCC VR-571B / DSM 19440 / HAR-13)).